Here is a 150-residue protein sequence, read N- to C-terminus: UPF0208 membrane protein VC_1099 (150 aa).

The next 2 membrane-spanning stretches (helical) occupy residues 42-62 (FAIK…MVFA) and 70-90 (AIVV…WLGH).

Belongs to the UPF0208 family.

The protein resides in the cell inner membrane. This is UPF0208 membrane protein VC_1099 from Vibrio cholerae serotype O1 (strain ATCC 39315 / El Tor Inaba N16961).